The sequence spans 771 residues: Solute carrier family 7 member 14 (771 aa).

6 consecutive transmembrane segments (helical) span residues 58–78 (LISLGVGSCVGTGMYVVSGLV), 83–103 (AGPGVIVSFIIAAVASILSGV), 130–150 (FVAFFIGWNLILEYLIGTAAG), 187–207 (YPDLLALVIAIIVTIIVALGV), 216–236 (VLNVLNLAVWVFIMIAGFFFI), and 251–271 (WSGVLQGAATCFYAFIGFDII). Asn282 carries N-linked (GlcNAc...) asparagine glycosylation. The next 5 membrane-spanning stretches (helical) occupy residues 291–311 (ASLVICLTAYVSVSMILTLMV), 336–356 (FVVAIGSVAGLTVSLLGSLFP), 360–380 (VIYAMAGDGLLFRFLAHVSSY), 384–404 (PVVACIVSGFLAALLSLLVSL), and 407–427 (LIEMMSIGTLLAYTLVSVCVL). 3 positions are modified to phosphoserine: Ser465, Ser468, and Ser488. 4 helical membrane-spanning segments follow: residues 565–585 (VTICVLLLFILMFVFCSFIIF), 596–616 (WAILLVVLMVLLISALVFVIL), 628–648 (MAPCLPFVPAFAMLVNIYLML), and 655–675 (WIRFAVWCFVGMLIYFGYGIW). N-linked (GlcNAc...) asparagine glycosylation is present at Asn676. The interval 712–771 (TEGESQENWGGPAEDKGFYYQQMSDTQPNTRTSSKAKSKSKHKQNSEALIANDELDYSPE) is disordered. Polar residues predominate over residues 732–743 (QQMSDTQPNTRT). Residues 745–754 (SKAKSKSKHK) show a composition bias toward basic residues. Phosphoserine is present on residues Ser757 and Ser769.

The protein belongs to the amino acid-polyamine-organocation (APC) superfamily. Cationic amino acid transporter (CAT) (TC 2.A.3.3) family.

The protein localises to the lysosome membrane. It catalyses the reaction 4-aminobutanoate(in) = 4-aminobutanoate(out). In terms of biological role, imports 4-aminobutanoate (GABA) into lysosomes. May act as a GABA sensor that regulates mTORC2-dependent INS signaling and gluconeogenesis. The transport mechanism and substrate selectivity remain to be elucidated. The chain is Solute carrier family 7 member 14 from Bos taurus (Bovine).